The following is a 102-amino-acid chain: NADH-quinone oxidoreductase subunit K (102 aa).

Transmembrane regions (helical) follow at residues 5–25 (LSHFLIVAAMLFTIGVAGIIL), 30–50 (IIVVLMSVELILLSVNINLVS), and 62–82 (VFSLFVLTVAAAEAAIGLAIL).

The protein belongs to the complex I subunit 4L family. As to quaternary structure, NDH-1 is composed of 14 different subunits. Subunits NuoA, H, J, K, L, M, N constitute the membrane sector of the complex.

It is found in the cell inner membrane. The enzyme catalyses a quinone + NADH + 5 H(+)(in) = a quinol + NAD(+) + 4 H(+)(out). NDH-1 shuttles electrons from NADH, via FMN and iron-sulfur (Fe-S) centers, to quinones in the respiratory chain. The immediate electron acceptor for the enzyme in this species is believed to be ubiquinone. Couples the redox reaction to proton translocation (for every two electrons transferred, four hydrogen ions are translocated across the cytoplasmic membrane), and thus conserves the redox energy in a proton gradient. This Methylocella silvestris (strain DSM 15510 / CIP 108128 / LMG 27833 / NCIMB 13906 / BL2) protein is NADH-quinone oxidoreductase subunit K.